A 199-amino-acid polypeptide reads, in one-letter code: Probable thymidylate kinase (199 aa).

9–16 is a binding site for ATP; the sequence is GIDGCGKT.

This sequence belongs to the thymidylate kinase family.

The catalysed reaction is dTMP + ATP = dTDP + ADP. The protein is Probable thymidylate kinase of Methanococcus maripaludis (strain C6 / ATCC BAA-1332).